The chain runs to 284 residues: HTH-type transcriptional activator RhaR (284 aa).

The 99-residue stretch at 181 to 279 folds into the HTH araC/xylS-type domain; it reads DMLMNALRAS…GVSPSAYRQR (99 aa). DNA-binding regions (H-T-H motif) lie at residues 198–219 and 246–269; these read EAFC…KEQT and IGDV…HQAF.

Binds DNA as a dimer.

The protein resides in the cytoplasm. Its function is as follows. Activates expression of the rhaSR operon in response to L-rhamnose. In Pectobacterium atrosepticum (strain SCRI 1043 / ATCC BAA-672) (Erwinia carotovora subsp. atroseptica), this protein is HTH-type transcriptional activator RhaR.